Consider the following 706-residue polypeptide: Fatty acid oxidation complex subunit alpha (706 aa).

Residues 1-188 (MDKSFTLNRL…KMGLVDDVVP (188 aa)) form an enoyl-CoA hydratase region. The segment at 308–706 (KAVNKVMVLG…MAESGSKFYE (399 aa)) is 3-hydroxyacyl-CoA dehydrogenase.

The protein in the N-terminal section; belongs to the enoyl-CoA hydratase/isomerase family. In the central section; belongs to the 3-hydroxyacyl-CoA dehydrogenase family. In terms of assembly, heterotetramer of two alpha chains (FadJ) and two beta chains (FadI).

It is found in the cytoplasm. The catalysed reaction is a (3S)-3-hydroxyacyl-CoA = a (2E)-enoyl-CoA + H2O. The enzyme catalyses a 4-saturated-(3S)-3-hydroxyacyl-CoA = a (3E)-enoyl-CoA + H2O. It catalyses the reaction a (3S)-3-hydroxyacyl-CoA + NAD(+) = a 3-oxoacyl-CoA + NADH + H(+). It carries out the reaction (3S)-3-hydroxybutanoyl-CoA = (3R)-3-hydroxybutanoyl-CoA. It participates in lipid metabolism; fatty acid beta-oxidation. Catalyzes the formation of a hydroxyacyl-CoA by addition of water on enoyl-CoA. Also exhibits 3-hydroxyacyl-CoA epimerase and 3-hydroxyacyl-CoA dehydrogenase activities. The protein is Fatty acid oxidation complex subunit alpha of Shewanella loihica (strain ATCC BAA-1088 / PV-4).